We begin with the raw amino-acid sequence, 443 residues long: Thymidine phosphorylase (443 aa).

The protein belongs to the thymidine/pyrimidine-nucleoside phosphorylase family. In terms of assembly, homodimer.

The catalysed reaction is thymidine + phosphate = 2-deoxy-alpha-D-ribose 1-phosphate + thymine. The protein operates within pyrimidine metabolism; dTMP biosynthesis via salvage pathway; dTMP from thymine: step 1/2. Functionally, the enzymes which catalyze the reversible phosphorolysis of pyrimidine nucleosides are involved in the degradation of these compounds and in their utilization as carbon and energy sources, or in the rescue of pyrimidine bases for nucleotide synthesis. This chain is Thymidine phosphorylase, found in Shewanella sediminis (strain HAW-EB3).